A 407-amino-acid chain; its full sequence is Oligopeptide transport system permease protein OppB (407 aa).

6 helical membrane passes run Leu9–Ala29, Leu101–Val121, Ile134–Leu154, Phe179–Thr199, Ile238–Ile258, and Ile288–Leu308. The 211-residue stretch at Val97–Val307 folds into the ABC transmembrane type-1 domain.

Belongs to the binding-protein-dependent transport system permease family. OppBC subfamily. In terms of assembly, the complex is composed of two ATP-binding proteins (OppD and OppF), two transmembrane proteins (OppB and OppC) and a solute-binding protein (OppA).

Its subcellular location is the cell membrane. Its function is as follows. Part of the ABC transporter complex OppABCDF involved in the uptake of oligopeptides. Probably responsible for the translocation of the substrate across the membrane. The polypeptide is Oligopeptide transport system permease protein OppB (oppB) (Mycoplasma genitalium (strain ATCC 33530 / DSM 19775 / NCTC 10195 / G37) (Mycoplasmoides genitalium)).